The sequence spans 425 residues: Transmembrane protein 184A (425 aa).

The next 7 helical transmembrane spans lie at 51–71, 96–116, 133–153, 189–209, 226–246, 261–281, and 303–323; these read LFLT…TALL, LLFI…LLGG, FVIY…SAIM, TLQF…LQAF, VTLV…LFYF, FLTI…LAIL, and LAAG…SLAL. Positions 375 to 425 are disordered; that stretch reads QYTQQSTHEAPGPGQGGHPSPSTHPGPASGSGGGKKSRNIEKRMLIPSEDL. A compositionally biased stretch (low complexity) spans 392–402; sequence HPSPSTHPGPA.

Belongs to the TMEM184 family. Expressed in vascular cells (at protein level).

It localises to the cell membrane. The protein localises to the cytoplasm. Its subcellular location is the perinuclear region. It is found in the early endosome membrane. The protein resides in the endosome. It localises to the cytoplasmic vesicle. The protein localises to the secretory vesicle membrane. Its subcellular location is the cytoplasmic vesicle membrane. In terms of biological role, acts as a heparin receptor in vascular cells. May be involved in vesicle transport in exocrine cells and Sertoli cells. This chain is Transmembrane protein 184A (Tmem184a), found in Rattus norvegicus (Rat).